A 689-amino-acid chain; its full sequence is DNA ligase (689 aa).

Residues 40–44, 89–90, and E121 each bind NAD(+); these read DAEYD and SL. K123 serves as the catalytic N6-AMP-lysine intermediate. 4 residues coordinate NAD(+): R144, E179, K295, and K319. 4 residues coordinate Zn(2+): C413, C416, C431, and C437. One can recognise a BRCT domain in the interval 610–689; sequence REQSSLTGKI…AEWLTLVRDI (80 aa).

It belongs to the NAD-dependent DNA ligase family. LigA subfamily. The cofactor is Mg(2+). Requires Mn(2+) as cofactor.

The enzyme catalyses NAD(+) + (deoxyribonucleotide)n-3'-hydroxyl + 5'-phospho-(deoxyribonucleotide)m = (deoxyribonucleotide)n+m + AMP + beta-nicotinamide D-nucleotide.. In terms of biological role, DNA ligase that catalyzes the formation of phosphodiester linkages between 5'-phosphoryl and 3'-hydroxyl groups in double-stranded DNA using NAD as a coenzyme and as the energy source for the reaction. It is essential for DNA replication and repair of damaged DNA. The polypeptide is DNA ligase (Rickettsia bellii (strain RML369-C)).